The sequence spans 1657 residues: Putative serine/threonine-protein kinase/receptor R826 (1657 aa).

The N-terminal stretch at 1–23 (MRLNSQIVFCIVVVISCLSMIEC) is a signal peptide. 9 N-linked (GlcNAc...) asparagine; by host glycosylation sites follow: Asn-153, Asn-178, Asn-238, Asn-255, Asn-352, Asn-454, Asn-476, Asn-494, and Asn-596. Residues 742–762 (IILAVVIPIAFIIVCIICILV) form a helical membrane-spanning segment. The 264-residue stretch at 786–1049 (LELGEQLGTG…EIMTRLSNLM (264 aa)) folds into the Protein kinase 1 domain. Residues 792 to 800 (LGTGAFGEV) and Lys-813 contribute to the ATP site. Residue Asp-909 is the Proton acceptor of the active site. The interval 1089–1115 (VQNSYNRTDSYDLGSNNSHSSITSDTN) is disordered. The region spanning 1134 to 1277 (VVVFTDIISA…PTVTTAAAVT (144 aa)) is the Guanylate cyclase domain. One can recognise a Protein kinase 2 domain in the interval 1399–1651 (IKMGEQIGLG…DDVIIVLAKF (253 aa)). Residues 1405–1413 (IGLGSYGVV) and Lys-1426 each bind ATP. Asp-1522 (proton acceptor) is an active-site residue.

It localises to the membrane. It catalyses the reaction L-seryl-[protein] + ATP = O-phospho-L-seryl-[protein] + ADP + H(+). The catalysed reaction is L-threonyl-[protein] + ATP = O-phospho-L-threonyl-[protein] + ADP + H(+). The protein is Putative serine/threonine-protein kinase/receptor R826 of Acanthamoeba polyphaga mimivirus (APMV).